The chain runs to 511 residues: Putative thymidine phosphorylase (511 aa).

Belongs to the thymidine/pyrimidine-nucleoside phosphorylase family. Type 2 subfamily.

The enzyme catalyses thymidine + phosphate = 2-deoxy-alpha-D-ribose 1-phosphate + thymine. This Bradyrhizobium sp. (strain BTAi1 / ATCC BAA-1182) protein is Putative thymidine phosphorylase.